The following is a 186-amino-acid chain: Large ribosomal subunit protein bL9 (186 aa).

A disordered region spans residues 153 to 186; it reads ELRQVKSQSQKSQQQEAKQNEVGEATDSDKADQK. A compositionally biased stretch (low complexity) spans 157–169; sequence VKSQSQKSQQQEA.

Belongs to the bacterial ribosomal protein bL9 family.

Functionally, binds to the 23S rRNA. This Wolbachia sp. subsp. Brugia malayi (strain TRS) protein is Large ribosomal subunit protein bL9.